The following is a 473-amino-acid chain: GTPase Der (473 aa).

EngA-type G domains follow at residues 3–167 and 203–378; these read FTVA…GKDR and LRVA…RVWN. GTP contacts are provided by residues 9–16, 56–60, 119–122, 209–216, 256–260, and 321–324; these read GRPNVGKS, DTAGL, NKSE, GRPNAGKS, DTAGM, and NKWD. In terms of domain architecture, KH-like spans 379 to 463; that stretch reads KRISTARLNR…PIRIHFRSAE (85 aa).

It belongs to the TRAFAC class TrmE-Era-EngA-EngB-Septin-like GTPase superfamily. EngA (Der) GTPase family. As to quaternary structure, associates with the 50S ribosomal subunit.

Functionally, GTPase that plays an essential role in the late steps of ribosome biogenesis. In Rhizobium etli (strain CIAT 652), this protein is GTPase Der.